Here is a 947-residue protein sequence, read N- to C-terminus: Bifunctional glutamine synthetase adenylyltransferase/adenylyl-removing enzyme (947 aa).

The interval 1 to 443 (MQLPSSLVSV…VFETLIGDDE (443 aa)) is adenylyl removase. The segment at 451 to 947 (ARHFHELWDM…VKQAWNQWFA (497 aa)) is adenylyl transferase.

Belongs to the GlnE family. The cofactor is Mg(2+).

The catalysed reaction is [glutamine synthetase]-O(4)-(5'-adenylyl)-L-tyrosine + phosphate = [glutamine synthetase]-L-tyrosine + ADP. It catalyses the reaction [glutamine synthetase]-L-tyrosine + ATP = [glutamine synthetase]-O(4)-(5'-adenylyl)-L-tyrosine + diphosphate. Functionally, involved in the regulation of glutamine synthetase GlnA, a key enzyme in the process to assimilate ammonia. When cellular nitrogen levels are high, the C-terminal adenylyl transferase (AT) inactivates GlnA by covalent transfer of an adenylyl group from ATP to specific tyrosine residue of GlnA, thus reducing its activity. Conversely, when nitrogen levels are low, the N-terminal adenylyl removase (AR) activates GlnA by removing the adenylyl group by phosphorolysis, increasing its activity. The regulatory region of GlnE binds the signal transduction protein PII (GlnB) which indicates the nitrogen status of the cell. This Vibrio parahaemolyticus serotype O3:K6 (strain RIMD 2210633) protein is Bifunctional glutamine synthetase adenylyltransferase/adenylyl-removing enzyme.